Consider the following 70-residue polypeptide: Turripeptide Gsp9.3 (70 aa).

Positions 1-20 are cleaved as a signal peptide; that stretch reads MKVYCLLLVLLVGLVSQAHG. The Kazal-like domain occupies 21–70; the sequence is QLDKKCQMVCTFDYRPVCGSDGRTYPNKCTLTSTACMSQRSITVFHDGEC. 3 disulfide bridges follow: cysteine 26–cysteine 56, cysteine 30–cysteine 49, and cysteine 38–cysteine 70.

The protein belongs to the conopeptide P-like superfamily. As to expression, expressed by the venom duct.

The protein resides in the secreted. Acts as a neurotoxin by inhibiting an ion channel. May also act as a serine protease inhibitor, since it possess the kazal serine protease inhibitor signature. The protein is Turripeptide Gsp9.3 of Gemmula speciosa (Splendid gem-turris).